Consider the following 516-residue polypeptide: ADP-ribosylation factor GTPase-activating protein 3 (516 aa).

The 117-residue stretch at 10–126 (LTIFKRLRSV…IKSLASQATR (117 aa)) folds into the Arf-GAP domain. The C4-type zinc-finger motif lies at 25 to 48 (CFDCGAKNPSWASITYGVFLCIDC). The interval 170-199 (AEPSSLTSRPAETTLENNEGGQEQGPCVEG) is disordered. Over residues 173-190 (SSLTSRPAETTLENNEGG) the composition is skewed to polar residues. Ser231 is subject to Phosphoserine. The stretch at 243–264 (NEIEKQAQAADKMKEQEDLAKA) forms a coiled coil. A phosphoserine mark is found at Ser270, Ser274, Ser331, and Ser370. Positions 393-417 (TTGYSDRPTARHKPDYEPVENTDEA) are disordered. Phosphoserine is present on residues Ser428, Ser451, Ser453, Ser455, Ser457, and Ser458.

It localises to the cytoplasm. The protein resides in the golgi apparatus membrane. GAP activity stimulated by phosphatidylinositol 4,5-bisphosphate (PIP2). Functionally, GTPase-activating protein (GAP) for ADP ribosylation factor 1 (ARF1). Hydrolysis of ARF1-bound GTP may lead to dissociation of coatomer from Golgi-derived membranes to allow fusion with target membranes. In Pongo abelii (Sumatran orangutan), this protein is ADP-ribosylation factor GTPase-activating protein 3.